The primary structure comprises 287 residues: Urease accessory protein UreD (287 aa).

It belongs to the UreD family. UreD, UreF and UreG form a complex that acts as a GTP-hydrolysis-dependent molecular chaperone, activating the urease apoprotein by helping to assemble the nickel containing metallocenter of UreC. The UreE protein probably delivers the nickel.

It is found in the cytoplasm. Required for maturation of urease via the functional incorporation of the urease nickel metallocenter. The chain is Urease accessory protein UreD from Ureaplasma parvum serovar 3 (strain ATCC 27815 / 27 / NCTC 11736).